We begin with the raw amino-acid sequence, 338 residues long: Legumin B (338 aa).

The disordered stretch occupies residues 16-162 (SLNTKEDTAK…RQHSKGRKNG (147 aa)). A compositionally biased stretch (basic and acidic residues) spans 18 to 44 (NTKEDTAKRLRSPQDERGQIVKVEDGL). Acidic residues-rich tracts occupy residues 82-92 (DEDEDEEEEEE) and 136-150 (EEEE…EEEE). Positions 174–321 (ENIARPSRGD…AFGLRHSQVA (148 aa)) constitute a Cupin type-1 domain.

The protein belongs to the 11S seed storage protein (globulins) family. As to quaternary structure, hexamer; each subunit is composed of an acidic and a basic chain derived from a single precursor and linked by a disulfide bond.

Functionally, this protein found in the seeds of many leguminous and non-leguminous plants is the source of sulfur-containing amino acids in seed meals. This Pisum sativum (Garden pea) protein is Legumin B (LEGB).